Here is a 377-residue protein sequence, read N- to C-terminus: Erythronate-4-phosphate dehydrogenase (377 aa).

Positions 45 and 67 each coordinate substrate. NAD(+) is bound by residues aspartate 147, 210–212 (ASR), and aspartate 236. The active site involves arginine 212. The active site involves glutamate 241. The active-site Proton donor is the histidine 258. Glycine 261 provides a ligand contact to NAD(+). Residue tyrosine 262 participates in substrate binding.

The protein belongs to the D-isomer specific 2-hydroxyacid dehydrogenase family. PdxB subfamily. Homodimer.

The protein resides in the cytoplasm. The enzyme catalyses 4-phospho-D-erythronate + NAD(+) = (R)-3-hydroxy-2-oxo-4-phosphooxybutanoate + NADH + H(+). It participates in cofactor biosynthesis; pyridoxine 5'-phosphate biosynthesis; pyridoxine 5'-phosphate from D-erythrose 4-phosphate: step 2/5. Its function is as follows. Catalyzes the oxidation of erythronate-4-phosphate to 3-hydroxy-2-oxo-4-phosphonooxybutanoate. This is Erythronate-4-phosphate dehydrogenase from Aeromonas salmonicida (strain A449).